The primary structure comprises 365 residues: Cobalt-precorrin-5B C(1)-methyltransferase (365 aa).

The protein belongs to the CbiD family.

The catalysed reaction is Co-precorrin-5B + S-adenosyl-L-methionine = Co-precorrin-6A + S-adenosyl-L-homocysteine. It participates in cofactor biosynthesis; adenosylcobalamin biosynthesis; cob(II)yrinate a,c-diamide from sirohydrochlorin (anaerobic route): step 6/10. Functionally, catalyzes the methylation of C-1 in cobalt-precorrin-5B to form cobalt-precorrin-6A. The chain is Cobalt-precorrin-5B C(1)-methyltransferase from Pseudomonas fluorescens (strain Pf0-1).